Consider the following 587-residue polypeptide: Kelch-like ECH-associated protein 1B (587 aa).

The BTB domain occupies 44–117; sequence CDVTLRVRYC…AYTASISVGE (74 aa). In terms of domain architecture, BACK spans 153-253; it reads IGIASFAEQI…LTPHFLQRQL (101 aa). Kelch repeat units lie at residues 292–337, 338–388, 389–435, 436–482, 484–529, and 530–576; these read LIYT…VISG, LLYA…VIDG, MIYA…VINR, LLYA…ALGN, IYVM…THHG, and RIYV…VTME.

Belongs to the KEAP1 family. As to quaternary structure, homodimer and heterodimer; heterodimerizes with keap1a. Component of the BCR(KEAP1) E3 ubiquitin ligase complex, at least composed of 2 molecules of cul3, 2 molecules of keap1 (keap1a and/or keap1b), and rbx1. Interacts with nfe2l2/nrf2; the interaction is direct. In terms of processing, non-enzymatic covalent modifications of reactive cysteines by electrophile metabolites inactivate the BCR(KEAP1) complex. As to expression, widely expressed.

It localises to the cytoplasm. Its subcellular location is the nucleus. It participates in protein modification; protein ubiquitination. With respect to regulation, ubiquitin ligase activity of the BCR(KEAP1) complex is inhibited by oxidative stress and electrophile metabolites such as sulforaphane. Electrophile metabolites react with reactive cysteine residues in keap1 and trigger non-enzymatic covalent modifications of these cysteine residues, leading to inactivate the ubiquitin ligase activity of the BCR(KEAP1) complex. Its function is as follows. Substrate-specific adapter of a BCR (BTB-CUL3-RBX1) E3 ubiquitin ligase complex that regulates the response to oxidative stress by targeting nfe2l2/nrf2 for ubiquitination. Keap1 acts as a key sensor of oxidative and electrophilic stress: in normal conditions, the BCR(KEAP1) complex mediates ubiquitination and degradation of nfe2l2/nrf2, a transcription factor regulating expression of many cytoprotective genes. In response to oxidative stress, different electrophile metabolites trigger non-enzymatic covalent modifications of highly reactive cysteine residues in KEAP1, leading to inactivate the ubiquitin ligase activity of the BCR(KEAP1) complex, promoting nfe2l2/nrf2 nuclear accumulation and expression of phase II detoxifying enzymes. The polypeptide is Kelch-like ECH-associated protein 1B (Danio rerio (Zebrafish)).